The following is a 545-amino-acid chain: Lysine--tRNA ligase (545 aa).

Positions 41–49 (PSGVPHLGH) match the 'HIGH' region motif. The 'KMSKS' region signature appears at 306-310 (ALSSS).

This sequence belongs to the class-I aminoacyl-tRNA synthetase family.

Its subcellular location is the cytoplasm. It catalyses the reaction tRNA(Lys) + L-lysine + ATP = L-lysyl-tRNA(Lys) + AMP + diphosphate. This chain is Lysine--tRNA ligase, found in Natronomonas pharaonis (strain ATCC 35678 / DSM 2160 / CIP 103997 / JCM 8858 / NBRC 14720 / NCIMB 2260 / Gabara) (Halobacterium pharaonis).